The following is a 708-amino-acid chain: Phosphate acetyltransferase (708 aa).

Residues Glu388 to Glu708 form a phosphate acetyltransferase region.

The protein in the N-terminal section; belongs to the CobB/CobQ family. This sequence in the C-terminal section; belongs to the phosphate acetyltransferase and butyryltransferase family. Homohexamer.

It localises to the cytoplasm. It catalyses the reaction acetyl-CoA + phosphate = acetyl phosphate + CoA. Its pathway is metabolic intermediate biosynthesis; acetyl-CoA biosynthesis; acetyl-CoA from acetate: step 2/2. Functionally, involved in acetate metabolism. The polypeptide is Phosphate acetyltransferase (pta) (Buchnera aphidicola subsp. Acyrthosiphon pisum (strain APS) (Acyrthosiphon pisum symbiotic bacterium)).